Here is a 31-residue protein sequence, read N- to C-terminus: Dermaseptin-DI3 (31 aa).

Belongs to the frog skin active peptide (FSAP) family. Dermaseptin subfamily. As to expression, expressed by the skin glands.

The protein resides in the secreted. Its function is as follows. Antibacterial activity against Gram-positive bacteria S.aureus and E.faecalis, and Gram-negative bacteria P.aeruginosa and E.coli. This Phyllomedusa distincta (Monkey frog) protein is Dermaseptin-DI3.